The sequence spans 229 residues: Potassium/proton antiporter CemA (229 aa).

The next 3 membrane-spanning stretches (helical) occupy residues 7–27 (FTPL…SFSF), 114–134 (LICF…LVIL), and 189–209 (ILSG…KYWI).

The protein belongs to the CemA family.

The protein localises to the plastid. It localises to the chloroplast inner membrane. It catalyses the reaction K(+)(in) + H(+)(out) = K(+)(out) + H(+)(in). Its function is as follows. Contributes to K(+)/H(+) antiport activity by supporting proton efflux to control proton extrusion and homeostasis in chloroplasts in a light-dependent manner to modulate photosynthesis. Prevents excessive induction of non-photochemical quenching (NPQ) under continuous-light conditions. Indirectly promotes efficient inorganic carbon uptake into chloroplasts. This is Potassium/proton antiporter CemA from Ipomoea purpurea (Common morning glory).